The primary structure comprises 249 residues: tRNA (guanine-N(1)-)-methyltransferase (249 aa).

Residues Gly-112 and 132–137 (LGDFVL) each bind S-adenosyl-L-methionine.

The protein belongs to the RNA methyltransferase TrmD family. As to quaternary structure, homodimer.

Its subcellular location is the cytoplasm. The catalysed reaction is guanosine(37) in tRNA + S-adenosyl-L-methionine = N(1)-methylguanosine(37) in tRNA + S-adenosyl-L-homocysteine + H(+). Specifically methylates guanosine-37 in various tRNAs. The polypeptide is tRNA (guanine-N(1)-)-methyltransferase (Citrifermentans bemidjiense (strain ATCC BAA-1014 / DSM 16622 / JCM 12645 / Bem) (Geobacter bemidjiensis)).